Here is a 149-residue protein sequence, read N- to C-terminus: Transcription antitermination protein NusB (149 aa).

It belongs to the NusB family.

Involved in transcription antitermination. Required for transcription of ribosomal RNA (rRNA) genes. Binds specifically to the boxA antiterminator sequence of the ribosomal RNA (rrn) operons. The chain is Transcription antitermination protein NusB from Chromobacterium violaceum (strain ATCC 12472 / DSM 30191 / JCM 1249 / CCUG 213 / NBRC 12614 / NCIMB 9131 / NCTC 9757 / MK).